The following is a 207-amino-acid chain: Large ribosomal subunit protein uL4 (207 aa).

Residues 44 to 85 (MRQGTHKTKNRAEVSGGGRKPWRQKGTGRARQGSIRSPQWRG) form a disordered region.

It belongs to the universal ribosomal protein uL4 family. As to quaternary structure, part of the 50S ribosomal subunit.

Its function is as follows. One of the primary rRNA binding proteins, this protein initially binds near the 5'-end of the 23S rRNA. It is important during the early stages of 50S assembly. It makes multiple contacts with different domains of the 23S rRNA in the assembled 50S subunit and ribosome. Forms part of the polypeptide exit tunnel. The chain is Large ribosomal subunit protein uL4 from Geobacillus thermodenitrificans (strain NG80-2).